A 217-amino-acid chain; its full sequence is Small ribosomal subunit protein uS3 (217 aa).

Residues 40-110 enclose the KH type-2 domain; sequence IRDLINNSFN…EVYINIHEVR (71 aa).

It belongs to the universal ribosomal protein uS3 family. As to quaternary structure, part of the 30S ribosomal subunit. Forms a tight complex with proteins S10 and S14.

Its function is as follows. Binds the lower part of the 30S subunit head. Binds mRNA in the 70S ribosome, positioning it for translation. The chain is Small ribosomal subunit protein uS3 from Rickettsia canadensis (strain McKiel).